The primary structure comprises 408 residues: Acetate kinase (408 aa).

Mg(2+) is bound at residue Asn7. ATP is bound at residue Lys14. Residue Arg91 participates in substrate binding. The active-site Proton donor/acceptor is Asp148. Residues 208-212 (HLGNG) and 283-285 (DLR) each bind ATP. A Mg(2+)-binding site is contributed by Glu388.

Belongs to the acetokinase family. In terms of assembly, homodimer. Requires Mg(2+) as cofactor. Mn(2+) serves as cofactor.

It is found in the cytoplasm. The catalysed reaction is acetate + ATP = acetyl phosphate + ADP. Its pathway is metabolic intermediate biosynthesis; acetyl-CoA biosynthesis; acetyl-CoA from acetate: step 1/2. Functionally, catalyzes the formation of acetyl phosphate from acetate and ATP. Can also catalyze the reverse reaction. The sequence is that of Acetate kinase from Borrelia hermsii (strain HS1 / DAH).